Reading from the N-terminus, the 210-residue chain is Acetoin utilization protein AcuA (210 aa).

Positions 19–189 constitute an N-acetyltransferase domain; it reads VLIEGPISPE…ANCLMARIGK (171 aa).

The protein belongs to the acetyltransferase family. In terms of assembly, monomer.

The protein operates within ketone degradation; acetoin degradation. Part of the acuABC operon, which is possibly involved in the breakdown of acetoin and butanediol. Acts as an acetyltransferase inactivating acetyl-CoA synthetase AcsA via acetylation at a Lys residue. This Bacillus licheniformis (strain ATCC 14580 / DSM 13 / JCM 2505 / CCUG 7422 / NBRC 12200 / NCIMB 9375 / NCTC 10341 / NRRL NRS-1264 / Gibson 46) protein is Acetoin utilization protein AcuA.